The chain runs to 121 residues: Large ribosomal subunit protein uL18 (121 aa).

Belongs to the universal ribosomal protein uL18 family. In terms of assembly, part of the 50S ribosomal subunit; part of the 5S rRNA/L5/L18/L25 subcomplex. Contacts the 5S and 23S rRNAs.

Functionally, this is one of the proteins that bind and probably mediate the attachment of the 5S RNA into the large ribosomal subunit, where it forms part of the central protuberance. The chain is Large ribosomal subunit protein uL18 from Ehrlichia chaffeensis (strain ATCC CRL-10679 / Arkansas).